Consider the following 443-residue polypeptide: Ribosomal protein uS12 methylthiotransferase RimO (443 aa).

Residues 5-116 (PTIAINHLGC…IVDIIRRTEQ (112 aa)) enclose the MTTase N-terminal domain. [4Fe-4S] cluster contacts are provided by Cys14, Cys50, Cys79, Cys154, Cys158, and Cys161. The 230-residue stretch at 140–369 (TTNEAIAYLR…MALQQPISAQ (230 aa)) folds into the Radical SAM core domain. Residues 372–438 (AACLGQTLDV…DYDLYGMTAE (67 aa)) enclose the TRAM domain.

Belongs to the methylthiotransferase family. RimO subfamily. [4Fe-4S] cluster serves as cofactor.

The protein localises to the cytoplasm. It catalyses the reaction L-aspartate(89)-[ribosomal protein uS12]-hydrogen + (sulfur carrier)-SH + AH2 + 2 S-adenosyl-L-methionine = 3-methylsulfanyl-L-aspartate(89)-[ribosomal protein uS12]-hydrogen + (sulfur carrier)-H + 5'-deoxyadenosine + L-methionine + A + S-adenosyl-L-homocysteine + 2 H(+). Catalyzes the methylthiolation of an aspartic acid residue of ribosomal protein uS12. The polypeptide is Ribosomal protein uS12 methylthiotransferase RimO (Synechocystis sp. (strain ATCC 27184 / PCC 6803 / Kazusa)).